A 340-amino-acid polypeptide reads, in one-letter code: Ferrochelatase (340 aa).

Residues H218 and E298 each contribute to the Fe cation site.

It belongs to the ferrochelatase family.

It localises to the cytoplasm. It carries out the reaction heme b + 2 H(+) = protoporphyrin IX + Fe(2+). It participates in porphyrin-containing compound metabolism; protoheme biosynthesis; protoheme from protoporphyrin-IX: step 1/1. Functionally, catalyzes the ferrous insertion into protoporphyrin IX. This Wolbachia sp. subsp. Brugia malayi (strain TRS) protein is Ferrochelatase.